A 146-amino-acid chain; its full sequence is Transmembrane protein 207 (146 aa).

Positions Met-1 to Ser-29 are cleaved as a signal peptide. A helical transmembrane segment spans residues Ile-52–Cys-72.

Interacts with WWOX. In terms of tissue distribution, expressed in some signet-ring cell carcinoma, especially those showing high invasion and metastatic activity (at protein level).

It is found in the membrane. In Homo sapiens (Human), this protein is Transmembrane protein 207 (TMEM207).